Consider the following 353-residue polypeptide: Guanine nucleotide-binding protein subunit alpha (353 aa).

The tract at residues 1–25 is disordered; the sequence is MGCGMSTEDKEGKARNEEIENQLKR. The N-myristoyl glycine moiety is linked to residue Gly-2. Cys-3 carries S-palmitoyl cysteine lipidation. A compositionally biased stretch (basic and acidic residues) spans 7 to 25; sequence TEDKEGKARNEEIENQLKR. In terms of domain architecture, G-alpha spans 32–353; that stretch reads NEIKMLLLGA…QENLRLCGLI (322 aa). Residues 35 to 48 are G1 motif; the sequence is KMLLLGAGESGKST. Positions 43, 44, 45, 46, 47, 48, 150, 175, 181, 203, 269, 270, 272, and 325 each coordinate GTP. Ser-47 serves as a coordination point for Mg(2+). A G2 motif region spans residues 173 to 181; sequence DVLRSRVKT. Mg(2+) is bound at residue Thr-181. Positions 196-205 are G3 motif; sequence YRMFDVGGQR. The interval 265 to 272 is G4 motif; sequence ILFLNKID. The segment at 323–328 is G5 motif; that stretch reads TCATDT.

It belongs to the G-alpha family. G(q) subfamily. In terms of assembly, g proteins are composed of 3 units; alpha, beta and gamma. The alpha chain contains the guanine nucleotide binding site. Requires Mg(2+) as cofactor.

In terms of biological role, guanine nucleotide-binding proteins (G proteins) are involved as modulators or transducers in various transmembrane signaling systems. In Emericella nidulans (strain FGSC A4 / ATCC 38163 / CBS 112.46 / NRRL 194 / M139) (Aspergillus nidulans), this protein is Guanine nucleotide-binding protein subunit alpha (fadA).